Reading from the N-terminus, the 200-residue chain is Small ribosomal subunit protein uS4 (200 aa).

The S4 RNA-binding domain maps to Arg106–Ile170. A disordered region spans residues Ala178 to Glu200. Residues Glu179–Ala190 are compositionally biased toward basic and acidic residues.

It belongs to the universal ribosomal protein uS4 family. As to quaternary structure, part of the 30S ribosomal subunit. Contacts protein S5. The interaction surface between S4 and S5 is involved in control of translational fidelity.

Its function is as follows. One of the primary rRNA binding proteins, it binds directly to 16S rRNA where it nucleates assembly of the body of the 30S subunit. In terms of biological role, with S5 and S12 plays an important role in translational accuracy. In Thermoplasma volcanium (strain ATCC 51530 / DSM 4299 / JCM 9571 / NBRC 15438 / GSS1), this protein is Small ribosomal subunit protein uS4.